Reading from the N-terminus, the 353-residue chain is Photosystem II D2 protein (353 aa).

Residue threonine 2 is modified to N-acetylthreonine. Threonine 2 bears the Phosphothreonine mark. A helical membrane pass occupies residues 41-61 (CAYFALGGWFTGTTFVTSWYT). Residue histidine 118 participates in chlorophyll a binding. A helical transmembrane segment spans residues 125–141 (GFMLRQFELARSVQLRP). Pheophytin a-binding residues include glutamine 130 and asparagine 143. Residues 153-166 (VFVSVFLIYPLGQS) traverse the membrane as a helical segment. Histidine 198 serves as a coordination point for chlorophyll a. Residues 208 to 228 (AALLCAIHGATVENTLFEDGD) form a helical membrane-spanning segment. Histidine 215 and phenylalanine 262 together coordinate a plastoquinone. Histidine 215 is a binding site for Fe cation. Fe cation is bound at residue histidine 269. Residues 279-295 (GLWMSALGVVGLALNLR) form a helical membrane-spanning segment.

This sequence belongs to the reaction center PufL/M/PsbA/D family. In terms of assembly, PSII is composed of 1 copy each of membrane proteins PsbA, PsbB, PsbC, PsbD, PsbE, PsbF, PsbH, PsbI, PsbJ, PsbK, PsbL, PsbM, PsbT, PsbX, PsbY, PsbZ, Psb30/Ycf12, at least 3 peripheral proteins of the oxygen-evolving complex and a large number of cofactors. It forms dimeric complexes. The D1/D2 heterodimer binds P680, chlorophylls that are the primary electron donor of PSII, and subsequent electron acceptors. It shares a non-heme iron and each subunit binds pheophytin, quinone, additional chlorophylls, carotenoids and lipids. There is also a Cl(-1) ion associated with D1 and D2, which is required for oxygen evolution. The PSII complex binds additional chlorophylls, carotenoids and specific lipids. is required as a cofactor.

The protein localises to the plastid. It localises to the chloroplast thylakoid membrane. It catalyses the reaction 2 a plastoquinone + 4 hnu + 2 H2O = 2 a plastoquinol + O2. Functionally, photosystem II (PSII) is a light-driven water:plastoquinone oxidoreductase that uses light energy to abstract electrons from H(2)O, generating O(2) and a proton gradient subsequently used for ATP formation. It consists of a core antenna complex that captures photons, and an electron transfer chain that converts photonic excitation into a charge separation. The D1/D2 (PsbA/PsbD) reaction center heterodimer binds P680, the primary electron donor of PSII as well as several subsequent electron acceptors. D2 is needed for assembly of a stable PSII complex. This chain is Photosystem II D2 protein, found in Nuphar advena (Common spatterdock).